The primary structure comprises 37 residues: Large ribosomal subunit protein bL36c (37 aa).

It belongs to the bacterial ribosomal protein bL36 family.

It is found in the plastid. It localises to the chloroplast. The protein is Large ribosomal subunit protein bL36c (rpl36) of Marchantia polymorpha (Common liverwort).